The following is a 430-amino-acid chain: Glutamyl-tRNA reductase (430 aa).

Residues 50–53 (TCNR), S108, 113–115 (EPQ), and Q119 each bind substrate. C51 acts as the Nucleophile in catalysis. 188–193 (GAGEMA) is a binding site for NADP(+).

The protein belongs to the glutamyl-tRNA reductase family. Homodimer.

The enzyme catalyses (S)-4-amino-5-oxopentanoate + tRNA(Glu) + NADP(+) = L-glutamyl-tRNA(Glu) + NADPH + H(+). It participates in porphyrin-containing compound metabolism; protoporphyrin-IX biosynthesis; 5-aminolevulinate from L-glutamyl-tRNA(Glu): step 1/2. In terms of biological role, catalyzes the NADPH-dependent reduction of glutamyl-tRNA(Glu) to glutamate 1-semialdehyde (GSA). In Lawsonia intracellularis (strain PHE/MN1-00), this protein is Glutamyl-tRNA reductase.